Reading from the N-terminus, the 266-residue chain is uncharacterized protein (266 aa).

Belongs to the chlamydial CPn_0087/CT3_09/TC_0583 family.

This is an uncharacterized protein from Chlamydia muridarum (strain MoPn / Nigg).